Consider the following 223-residue polypeptide: Urease accessory protein UreF (223 aa).

It belongs to the UreF family. As to quaternary structure, ureD, UreF and UreG form a complex that acts as a GTP-hydrolysis-dependent molecular chaperone, activating the urease apoprotein by helping to assemble the nickel containing metallocenter of UreC. The UreE protein probably delivers the nickel.

The protein localises to the cytoplasm. Its function is as follows. Required for maturation of urease via the functional incorporation of the urease nickel metallocenter. This chain is Urease accessory protein UreF, found in Mesorhizobium japonicum (strain LMG 29417 / CECT 9101 / MAFF 303099) (Mesorhizobium loti (strain MAFF 303099)).